Reading from the N-terminus, the 634-residue chain is Alpha-L-iduronidase (634 aa).

The signal sequence occupies residues 1-16; sequence MLTFFAAFLAAPLALA. The alpha-D-mannopyranose site is built by Pro-44, Leu-46, and His-48. His-81 contributes to the alpha-L-iduronate binding site. N-linked (GlcNAc...) asparagine glycosylation occurs at Asn-100. The alpha-L-iduronate site is built by Asn-171 and Glu-172. The Proton donor role is filled by Glu-172. Asn-180 and Asn-233 each carry an N-linked (GlcNAc...) asparagine glycan. Positions 254, 289, and 295 each coordinate alpha-L-iduronate. Glu-289 serves as the catalytic Nucleophile. Trp-296 serves as a coordination point for alpha-D-mannopyranose. The N-linked (GlcNAc...) asparagine glycan is linked to Asn-326. Alpha-L-iduronate-binding residues include Asp-339 and Arg-353. Residues Asn-362, Asn-405, and Asn-441 are each glycosylated (N-linked (GlcNAc...) asparagine). Cys-531 and Cys-567 are oxidised to a cystine.

The protein belongs to the glycosyl hydrolase 39 family. As to quaternary structure, monomer. In terms of processing, N-glycosylation contributes to substrate binding and is required for full enzymatic activity. Ubiquitous.

It is found in the lysosome. The catalysed reaction is Hydrolysis of unsulfated alpha-L-iduronosidic linkages in dermatan sulfate.. In Mus musculus (Mouse), this protein is Alpha-L-iduronidase (Idua).